Reading from the N-terminus, the 306-residue chain is Tryptophan 2,3-dioxygenase (306 aa).

Residues 75-79 (FIIQH), Tyr137, and Arg141 contribute to the substrate site. His264 contributes to the heme binding site. Substrate is bound at residue Thr278.

The protein belongs to the tryptophan 2,3-dioxygenase family. Homotetramer. Heme serves as cofactor.

The catalysed reaction is L-tryptophan + O2 = N-formyl-L-kynurenine. Its pathway is amino-acid degradation; L-tryptophan degradation via kynurenine pathway; L-kynurenine from L-tryptophan: step 1/2. Its function is as follows. Heme-dependent dioxygenase that catalyzes the oxidative cleavage of the L-tryptophan (L-Trp) pyrrole ring and converts L-tryptophan to N-formyl-L-kynurenine. Catalyzes the oxidative cleavage of the indole moiety. This chain is Tryptophan 2,3-dioxygenase, found in Paraburkholderia phytofirmans (strain DSM 17436 / LMG 22146 / PsJN) (Burkholderia phytofirmans).